We begin with the raw amino-acid sequence, 311 residues long: Malate dehydrogenase (311 aa).

NAD(+) contacts are provided by residues 7–13 and D34; that span reads GAAGGIG. Positions 81 and 87 each coordinate substrate. Residues N94 and 117-119 contribute to the NAD(+) site; that span reads ITN. Positions 119 and 153 each coordinate substrate. H177 serves as the catalytic Proton acceptor. M227 provides a ligand contact to NAD(+).

The protein belongs to the LDH/MDH superfamily. MDH type 1 family. In terms of assembly, homodimer.

It carries out the reaction (S)-malate + NAD(+) = oxaloacetate + NADH + H(+). Its function is as follows. Catalyzes the reversible oxidation of malate to oxaloacetate. The sequence is that of Malate dehydrogenase from Erwinia tasmaniensis (strain DSM 17950 / CFBP 7177 / CIP 109463 / NCPPB 4357 / Et1/99).